The primary structure comprises 155 residues: Ribonuclease H (155 aa).

Positions 1 to 142 (MLKQVEIFTD…CDVLARDAAS (142 aa)) constitute an RNase H type-1 domain. Residues aspartate 10, glutamate 48, aspartate 70, and aspartate 134 each coordinate Mg(2+).

The protein belongs to the RNase H family. As to quaternary structure, monomer. The cofactor is Mg(2+).

Its subcellular location is the cytoplasm. It catalyses the reaction Endonucleolytic cleavage to 5'-phosphomonoester.. Functionally, endonuclease that specifically degrades the RNA of RNA-DNA hybrids. The polypeptide is Ribonuclease H (Serratia proteamaculans (strain 568)).